Reading from the N-terminus, the 252-residue chain is Protein A47 (252 aa).

The protein belongs to the orthopoxvirus A47 protein family.

The chain is Protein A47 from Vaccinia virus (strain Western Reserve) (VACV).